We begin with the raw amino-acid sequence, 1407 residues long: E3 ubiquitin-protein ligase linker protein MMS1 (1407 aa).

The tract at residues 1-600 is required for interaction with MMS22; sequence MLGLRTHGLD…QFQIFRHLRI (600 aa). Thr-1294 bears the Phosphothreonine mark.

Component of multiple cullin-RING ligases (CRLs) composed of 4 subunits: the RING protein HRT1, the cullin RTT101, a linker protein MMS1, and one of many alternative substrate receptors belonging to a protein family described as DCAF (DDB1- and CUL4-associated factor). Component of a RTT101(MMS1-MMS22) complex with the substrate receptor MMS22. This complex further interacts with RTT107 and CTF4 to form RTT101-MMS1-MMS22-RTT107 and RTT101-MMS1-MMS22-CTF4 complexes respectively. Component of a RTT101(MSS1-CRT10) complex with the substrate receptor CRT10. Component of a RTT101(MSS1-ESC2) complex with the potential substrate receptor ESC2. Component of a RTT101(MSS1-ORC5) complex with the potential substrate receptor ORC5. Interacts with RTT101 (via N-ter). Interacts (via N-ter) with MMS22 (via C-ter). Interacts with CRT10.

The protein localises to the nucleus. In terms of biological role, component of multiple cullin-RING-based E3 ubiquitin-protein ligase complexes (CRLs), which mediate the ubiquitination of target proteins. The CRL associates with CDC34 as the E2 ubiquitin-conjugating enzyme. The functional specificity of the CRL depends on the type of the associated substrate receptor protein. RTT101(MMS1-MMS22) promotes fork progression through damaged DNA or natural pause sites by stabilizing replication proteins like the replication fork-pausing complex (FPC) and leading-strand polymerase at stalled replication forks. RTT101(MMS1-MMS22) ubiquitinates the acetylated histones H3K56ac-H4 at lysine residues H3K121, H3K122 and H3K125. Ubiquitination is required for efficient histone deposition during replication-coupled nucleosome assembly, probably by facilitating the transfer of H3-H4 from ASF1 to other chaperones involved in histone deposition. RTT101(MMS1-CRT10) may regulate nucleotide synthesis through transcriptional regulation of ribonucleotide reductase. RTT101(MMS1) is also involved in the non-functional rRNA decay (NRD) of 25S rRNA through the selective, ubiquitination-dependent degradation of nonfunctional ribosomal particles. Involved in the regulation of TY1 transposition. This chain is E3 ubiquitin-protein ligase linker protein MMS1 (MMS1), found in Saccharomyces cerevisiae (strain ATCC 204508 / S288c) (Baker's yeast).